The chain runs to 355 residues: Capsid protein VP1/VP2 (355 aa).

The segment covering 1 to 21 has biased composition (basic and acidic residues); the sequence is MADSTTMEHDGRGTKRKREAD. A disordered region spans residues 1-41; that stretch reads MADSTTMEHDGRGTKRKREADGGSGQGVGKGNSNAVKEGYG.

The protein belongs to the parvoviridae capsid protein family.

It localises to the virion. In terms of biological role, capsid protein self-assembles to form an icosahedral capsid with a T=1 symmetry, about 22 nm in diameter, and consisting of 60 copies of size variants of the capsid proteins, which differ in the N-terminushe capsid encapsulates the genomic ssDNA. Capsid proteins are responsible for the attachment to host cell receptors. This attachment induces virion internalization predominantly through clathrin-dependent endocytosis. The sequence is that of Capsid protein VP1/VP2 (VP) from Aedes albopictus densovirus (isolate Boublik/1994) (AalDNV).